The primary structure comprises 182 residues: Peptidyl-tRNA hydrolase (182 aa).

Tyrosine 14 lines the tRNA pocket. The Proton acceptor role is filled by histidine 19. Positions 60, 62, and 106 each coordinate tRNA.

It belongs to the PTH family. In terms of assembly, monomer.

Its subcellular location is the cytoplasm. The enzyme catalyses an N-acyl-L-alpha-aminoacyl-tRNA + H2O = an N-acyl-L-amino acid + a tRNA + H(+). Functionally, hydrolyzes ribosome-free peptidyl-tRNAs (with 1 or more amino acids incorporated), which drop off the ribosome during protein synthesis, or as a result of ribosome stalling. Its function is as follows. Catalyzes the release of premature peptidyl moieties from peptidyl-tRNA molecules trapped in stalled 50S ribosomal subunits, and thus maintains levels of free tRNAs and 50S ribosomes. This is Peptidyl-tRNA hydrolase from Campylobacter concisus (strain 13826).